Reading from the N-terminus, the 398-residue chain is Bifunctional enzyme IspD/IspF (398 aa).

The segment at 1-234 is 2-C-methyl-D-erythritol 4-phosphate cytidylyltransferase; the sequence is MSNSKRTAAI…SRLGALLGDI (234 aa). Positions 235 to 398 are 2-C-methyl-D-erythritol 2,4-cyclodiphosphate synthase; that stretch reads RTGTGYDVHA…LPWGTNGLAD (164 aa). A divalent metal cation contacts are provided by D241 and H243. Residues 241-243 and 267-268 contribute to the 4-CDP-2-C-methyl-D-erythritol 2-phosphate site; these read DVH and HS. Residue H275 coordinates a divalent metal cation. Residues 289–291, 365–368, F372, and R375 each bind 4-CDP-2-C-methyl-D-erythritol 2-phosphate; these read DIG and TTSE.

In the N-terminal section; belongs to the IspD/TarI cytidylyltransferase family. IspD subfamily. This sequence in the C-terminal section; belongs to the IspF family. A divalent metal cation is required as a cofactor.

The enzyme catalyses 2-C-methyl-D-erythritol 4-phosphate + CTP + H(+) = 4-CDP-2-C-methyl-D-erythritol + diphosphate. It catalyses the reaction 4-CDP-2-C-methyl-D-erythritol 2-phosphate = 2-C-methyl-D-erythritol 2,4-cyclic diphosphate + CMP. It functions in the pathway isoprenoid biosynthesis; isopentenyl diphosphate biosynthesis via DXP pathway; isopentenyl diphosphate from 1-deoxy-D-xylulose 5-phosphate: step 2/6. It participates in isoprenoid biosynthesis; isopentenyl diphosphate biosynthesis via DXP pathway; isopentenyl diphosphate from 1-deoxy-D-xylulose 5-phosphate: step 4/6. Bifunctional enzyme that catalyzes the formation of 4-diphosphocytidyl-2-C-methyl-D-erythritol from CTP and 2-C-methyl-D-erythritol 4-phosphate (MEP) (IspD), and catalyzes the conversion of 4-diphosphocytidyl-2-C-methyl-D-erythritol 2-phosphate (CDP-ME2P) to 2-C-methyl-D-erythritol 2,4-cyclodiphosphate (ME-CPP) with a corresponding release of cytidine 5-monophosphate (CMP) (IspF). In Rhodopseudomonas palustris (strain BisB18), this protein is Bifunctional enzyme IspD/IspF.